A 493-amino-acid chain; its full sequence is 6-aminohexanoate-cyclic-dimer hydrolase (493 aa).

Catalysis depends on charge relay system residues lysine 72 and serine 150. The active-site Acyl-ester intermediate is the serine 174.

This sequence belongs to the amidase family. In terms of assembly, homodimer.

It carries out the reaction 1,8-diazacyclotetradecane-2,9-dione + H2O = N-(6-aminohexanoyl)-6-aminohexanoate. It functions in the pathway xenobiotic degradation; nylon-6 oligomer degradation. With respect to regulation, strongly inhibited by 1 uM diisopropylphosphofluoridate and 10 uM p-chloromercuribenzoate but scarcely inhibited by 100 mM EDTA in vitro. In terms of biological role, specifically catalyzes the hydrolysis of 6-aminohexanoic acid cyclic dimer (1,8-diazacyclotetradecane-2,9-dione) to form the linear dimer 6-aminohexanoyl-6-aminohexanoic acid. Is inactive on 6-aminohexanoic acid oligomers (degree of polymerization 2 to 6), various other cyclic amides, cyclic diamides, linear amides, oligopeptides, and casein. Allows the bacterium to grow on a medium containing 6-aminohexanoic acid cyclic dimer as the sole carbon and nitrogen sources. The sequence is that of 6-aminohexanoate-cyclic-dimer hydrolase (nylA) from Paenarthrobacter ureafaciens.